We begin with the raw amino-acid sequence, 241 residues long: Uridylate kinase (241 aa).

13 to 16 (KVSG) is a binding site for ATP. UMP is bound at residue Gly55. ATP-binding residues include Gly56 and Arg60. UMP is bound by residues Asp75 and 136 to 143 (TGNPFFTT). ATP contacts are provided by Thr163, Gln164, Tyr169, and Asp172.

It belongs to the UMP kinase family. As to quaternary structure, homohexamer.

It is found in the cytoplasm. It catalyses the reaction UMP + ATP = UDP + ADP. The protein operates within pyrimidine metabolism; CTP biosynthesis via de novo pathway; UDP from UMP (UMPK route): step 1/1. Its activity is regulated as follows. Inhibited by UTP. In terms of biological role, catalyzes the reversible phosphorylation of UMP to UDP. The chain is Uridylate kinase from Parvibaculum lavamentivorans (strain DS-1 / DSM 13023 / NCIMB 13966).